The chain runs to 95 residues: Small ribosomal subunit protein bS18 (95 aa).

Belongs to the bacterial ribosomal protein bS18 family. In terms of assembly, part of the 30S ribosomal subunit. Forms a tight heterodimer with protein bS6.

In terms of biological role, binds as a heterodimer with protein bS6 to the central domain of the 16S rRNA, where it helps stabilize the platform of the 30S subunit. The sequence is that of Small ribosomal subunit protein bS18 from Rickettsia africae (strain ESF-5).